Reading from the N-terminus, the 63-residue chain is Gallinacin-4 (63 aa).

The first 19 residues, Met-1–Val-19, serve as a signal peptide directing secretion. Residues Gly-20–Pro-25 constitute a propeptide that is removed on maturation. Cystine bridges form between Cys-31/Cys-59, Cys-38/Cys-53, and Cys-43/Cys-60.

This sequence belongs to the beta-defensin family. As to expression, strong expression in the bone marrow and testis. Widely expressed. Weak expression in the ovarian stroma, but not expressed in the ovarian follicles.

Its subcellular location is the secreted. It is found in the cytoplasmic granule. Its function is as follows. Has bactericidal activity. Potent activity against S.typhimurium and S.entiriditis. The polypeptide is Gallinacin-4 (GAL4) (Gallus gallus (Chicken)).